A 444-amino-acid chain; its full sequence is F-box/FBD/LRR-repeat protein At5g53840 (444 aa).

The F-box domain occupies 17–63; it reads EERLSQLPDHLICVILSHLSTKDAVRTSILSTRWRNLWQLVPVLDFD. LRR repeat units follow at residues 103 to 123, 124 to 150, 151 to 171, 172 to 197, 199 to 224, 226 to 252, 273 to 299, 300 to 321, 322 to 347, 369 to 396, and 398 to 423; these read YYLT…IDIS, VFTC…KLSR, VTMV…DLDF, VNFT…TIVK, SEDN…RFDR, NGLV…EFIN, NRSM…TIKD, IFHY…LSAV, CSIS…SLKL, VSSL…YFLE, and STIL…HIRQ. Residues 356 to 408 form the FBD domain; it reads EEVMSSTVPPPCLVSSLKFVKLESQLLGCGTELKVARYFLENSTILEKLTLKI.

The chain is F-box/FBD/LRR-repeat protein At5g53840 from Arabidopsis thaliana (Mouse-ear cress).